The sequence spans 550 residues: MTPADLAELLKTTATAVLSEHALDTSALPQTVVVERPRNPEHGDYASNVALQLAKKVGANPRELAGWIVEALTKADGIASAEVAGPGFINLRLETSAQAKIVNAIIDAGSGFGHSELMAAHKVNLEFVSANPTGPIHIGGTRWAAVGDALGRLLSTQGADVVREYYFNDHGAQIDRFANSLIAAAKGEPTPDDGYAGSYINDIAARVLQKAPDALSLPDAQMHETFREIGVDLMFSHIKESLHEFGTDFDVYTHEDSMHSTGRVDQAVARLRETGNIYEKDGATWLRSSSFGDDKDRVVIKSDDKPAYIAGDLAYYLDKRERGFDLCIYMLGADHHGYIARLKAAAAAFGEDPGTVEVLIGQMVNLVRDGQPVRMSKRTGTVITLDDLVEAIGVDAARYSLIRSSVDTPIDIDLALWSSASNENPVYYVQYAHARLSALARNAAELGLIPDTDHLELLSHEKEGVLLRTLGDFPRMLKAAASLREPHRVCRYLEDLAGDYHRFYDSCRVLPQGDEEPTQLHTARLALCQATRQAIANGLGILGVTAPERM.

The 'HIGH' region motif lies at 130–140; sequence ANPTGPIHIGG.

Belongs to the class-I aminoacyl-tRNA synthetase family. In terms of assembly, monomer.

The protein localises to the cytoplasm. It carries out the reaction tRNA(Arg) + L-arginine + ATP = L-arginyl-tRNA(Arg) + AMP + diphosphate. The sequence is that of Arginine--tRNA ligase from Mycobacterium ulcerans (strain Agy99).